A 256-amino-acid polypeptide reads, in one-letter code: MDLSFIEGFETIWTVVRAVVLNYLLRSLKILSTILYVSAVISWNVSLKVFGNVLLPGFLTIRTVVIFILRIVSLFLWILADPAILLVQSVYWYFIRAPARFILMVGITLYPLYVLLSWAVFLGIIVGFSLNSVFTFIDSFATPSSNSTVTEAMTKMKNEKVLEYPYKDRNIMLGDLASRIPSKDSEKLDEERQPIALEKTKSLDSISHSSSSSRKSSTELKIPPVETRIVAEIPVPSSVKRRRHRPNKSMGSIKNS.

The next 4 membrane-spanning stretches (helical) occupy residues 5–25 (FIEG…NYLL), 30–50 (ILST…LKVF), 64–84 (VVIF…DPAI), and 105–125 (VGIT…LGII). The disordered stretch occupies residues 198–256 (EKTKSLDSISHSSSSSRKSSTELKIPPVETRIVAEIPVPSSVKRRRHRPNKSMGSIKNS). The span at 203–215 (LDSISHSSSSSRK) shows a compositional bias: low complexity. Serine 210 and serine 211 each carry phosphoserine.

The protein localises to the endoplasmic reticulum membrane. It is found in the nucleus membrane. This is an uncharacterized protein from Schizosaccharomyces pombe (strain 972 / ATCC 24843) (Fission yeast).